We begin with the raw amino-acid sequence, 283 residues long: Pantothenate synthetase (283 aa).

Residue 34 to 41 coordinates ATP; that stretch reads MGALHDGH. The Proton donor role is filled by H41. Q65 contacts (R)-pantoate. Q65 lines the beta-alanine pocket. 152 to 155 is an ATP binding site; sequence GSKD. Q158 provides a ligand contact to (R)-pantoate. ATP-binding positions include I181 and 189 to 192; that span reads MSSR.

This sequence belongs to the pantothenate synthetase family. As to quaternary structure, homodimer.

It localises to the cytoplasm. It catalyses the reaction (R)-pantoate + beta-alanine + ATP = (R)-pantothenate + AMP + diphosphate + H(+). It functions in the pathway cofactor biosynthesis; (R)-pantothenate biosynthesis; (R)-pantothenate from (R)-pantoate and beta-alanine: step 1/1. In terms of biological role, catalyzes the condensation of pantoate with beta-alanine in an ATP-dependent reaction via a pantoyl-adenylate intermediate. The chain is Pantothenate synthetase from Rhodopseudomonas palustris (strain HaA2).